A 409-amino-acid polypeptide reads, in one-letter code: MSVGTVYGKIGSPRVLFCVSVAAVAGVEVEHVDVQPHNFPADLAAKFPLQKMPVFVGKDGFPLSETLAIAFYLASLNKTRALNGTTAEEKAKVLQYCSFTNSELPGAFRPIIAPRVFGAPYDEQAAKEAETAIALIFARFDEELASKTYLVGSRLTLADIFFTCFLKFGATYVLTKSYLAKYTHIYRYYQTIYHQAKLDAITEPLKFIDQPLPIIKAENKEAAPAKKAEKKKDEKKKNAPKPQAERPAKPPKHPLASAPNGSFDIEEYKRVYSNQDTRSGALPWFFEHFDPENYSVWKVDYSYPEDLKQPVFMTNNLIGGFFQRLEASRKYIFGCCVVIGENGDNTITGAFVIKGHDYVPAFDVAPDWGSYTFTKLDINKPEDKAFIEDAWAWDKPIEGREVADGKVCK.

One can recognise a GST N-terminal domain in the interval 2–81; the sequence is SVGTVYGKIG…YLASLNKTRA (80 aa). A GST C-terminal domain is found at 86–212; that stretch reads TAEEKAKVLQ…EPLKFIDQPL (127 aa). The span at 219 to 248 shows a compositional bias: basic and acidic residues; sequence NKEAAPAKKAEKKKDEKKKNAPKPQAERPA. The segment at 219–261 is disordered; that stretch reads NKEAAPAKKAEKKKDEKKKNAPKPQAERPAKPPKHPLASAPNG. The region spanning 251-409 is the EF-1-gamma C-terminal domain; that stretch reads PKHPLASAPN…REVADGKVCK (159 aa).

EF-1 is composed of four subunits: alpha, beta, delta, and gamma.

Functionally, probably plays a role in anchoring the complex to other cellular components. The chain is Elongation factor 1-gamma (tef3) from Schizosaccharomyces pombe (strain 972 / ATCC 24843) (Fission yeast).